Consider the following 212-residue polypeptide: Probable transaldolase (212 aa).

Catalysis depends on Lys83, which acts as the Schiff-base intermediate with substrate.

This sequence belongs to the transaldolase family. Type 3B subfamily.

It localises to the cytoplasm. The catalysed reaction is D-sedoheptulose 7-phosphate + D-glyceraldehyde 3-phosphate = D-erythrose 4-phosphate + beta-D-fructose 6-phosphate. Its pathway is carbohydrate degradation; pentose phosphate pathway; D-glyceraldehyde 3-phosphate and beta-D-fructose 6-phosphate from D-ribose 5-phosphate and D-xylulose 5-phosphate (non-oxidative stage): step 2/3. In terms of biological role, transaldolase is important for the balance of metabolites in the pentose-phosphate pathway. The sequence is that of Probable transaldolase (tal) from Halalkalibacterium halodurans (strain ATCC BAA-125 / DSM 18197 / FERM 7344 / JCM 9153 / C-125) (Bacillus halodurans).